We begin with the raw amino-acid sequence, 557 residues long: MAELRHSSSLGSRSSSSPLRAAGDEDSSSPHVHDHSPNGGDDEDGRPRHPSRDRDRPIWFHSLFPFFGDDPRVSPQKNKISLLLILILAIASLISVYGIINHLNAPYLCKKDGIVLNCPHVKESPSPWENPLSATTSWKPCAERRIGGISDLPPENETNGYVFIHAEGGLNQQRIAICNAVAVAKIMNATLILPVLKQDQIWKDTTKFEDIFDVDHFIDYLKDDVRIVRDIPDWFTDKAELFSSIRRTVKNIPKYAAAQFYIDNVLPRIKEKKIMALKPFVDRLGYDNVPQEINRLRCRVNYHALKFLPEIEQMADSLVSRMRNRTGNPNPYMALHLRFEKGMVGLSFCDFVGTREEKVKMAEYRQKEWPRRFKNGSHLWQLALQKRKEGRCPLEPGEVAVILRAMGYPKETQIYVASGQVYGGQNRMAPLRNMFPNLVTKEDLAGKEELTTFRKHVTSLAALDFLVCLKSDVFVMTHGGNFAKLIIGARRYMGHRQKSIKPDKGLMSKSFGDPYMGWATFVEDVVVTHQTRTGLPEETFPNYDLWENPLTPCMCKA.

The interval 1-54 (MAELRHSSSLGSRSSSSPLRAAGDEDSSSPHVHDHSPNGGDDEDGRPRHPSRDR) is disordered. Over 1–79 (MAELRHSSSL…DPRVSPQKNK (79 aa)) the chain is Cytoplasmic. The segment covering 7-20 (SSSLGSRSSSSPLR) has biased composition (low complexity). Basic and acidic residues predominate over residues 45 to 54 (GRPRHPSRDR). A helical; Signal-anchor for type II membrane protein membrane pass occupies residues 80 to 100 (ISLLLILILAIASLISVYGII). Residues 101 to 557 (NHLNAPYLCK…NPLTPCMCKA (457 aa)) lie on the Lumenal side of the membrane. Asn156, Asn188, and Asn324 each carry an N-linked (GlcNAc...) asparagine glycan. 336–338 (HLR) serves as a coordination point for substrate. Asn375 is a glycosylation site (N-linked (GlcNAc...) asparagine).

It belongs to the glycosyltransferase GT106 family. As to expression, widely expressed with the highest expression in reproductive tissues and roots.

It localises to the golgi apparatus membrane. It functions in the pathway glycan metabolism; pectin biosynthesis. Functionally, glycosyltransferase involved in the biosynthesis of pectic type-II arabinogalactans. The protein is Protein PECTIC ARABINOGALACTAN SYNTHESIS-RELATED of Arabidopsis thaliana (Mouse-ear cress).